The primary structure comprises 125 residues: Thioredoxin H-type (125 aa).

Positions 2–112 (AEGNVFACHS…LERKVAALAA (111 aa)) constitute a Thioredoxin domain. Residues cysteine 38 and cysteine 41 each act as nucleophile in the active site. An intrachain disulfide couples cysteine 38 to cysteine 41.

It belongs to the thioredoxin family. Plant H-type subfamily.

It is found in the cytoplasm. Participates in various redox reactions through the reversible oxidation of the active center dithiol to a disulfide. The H form is known to activate a number of cytosolic enzymes. The sequence is that of Thioredoxin H-type (SB09) from Picea mariana (Black spruce).